The primary structure comprises 411 residues: Bestrophin homolog 26 (411 aa).

4 consecutive transmembrane segments (helical) span residues 30–50, 73–93, 235–255, and 272–292; these read FTAIFKELCLFLGLYFLFMVI, SHQEFTIPLEFLLGFFVSSVV, IPIPLAYPQAVFLAVRCYFAV, and TWITFFPVLTTFQYIFMMGWM.

This sequence belongs to the anion channel-forming bestrophin (TC 1.A.46) family. Calcium-sensitive chloride channel subfamily. In terms of assembly, forms oligomers.

The protein localises to the cell membrane. In terms of biological role, forms chloride channels. The sequence is that of Bestrophin homolog 26 (best-26) from Caenorhabditis elegans.